A 629-amino-acid chain; its full sequence is uncharacterized protein (629 aa).

The ABC transporter 1 domain maps to 4-255 (LKAENLYKTY…KRAEREAQAE (252 aa)). 36–43 (GPNGTGKS) provides a ligand contact to ATP. A disordered region spans residues 284–304 (KARIDRVETLKEQTGPQSSGS). Basic and acidic residues predominate over residues 285-294 (ARIDRVETLK). Polar residues predominate over residues 295–304 (EQTGPQSSGS). The 219-residue stretch at 319–537 (IEAENVMIAY…EESKAKKAAP (219 aa)) folds into the ABC transporter 2 domain. 351–358 (GPNGIGKT) contacts ATP. The tract at residues 530–555 (SKAKKAAPKPAAEEKTAEAEPKKKRK) is disordered. Residues 540-550 (AAEEKTAEAEP) show a composition bias toward basic and acidic residues. Residues 560 to 629 (KDQLEWDGIE…LSLMIEELES (70 aa)) are a coiled coil.

Belongs to the ABC transporter superfamily.

This is an uncharacterized protein from Bacillus subtilis (strain 168).